A 429-amino-acid chain; its full sequence is tRNA (guanine(9)-N1)-methyltransferase (429 aa).

The SAM-dependent MTase TRM10-type domain occupies 131–379; that stretch reads KERKEAQRRI…AVIPIRKYAP (249 aa). Residues 285-286, Gly-305, 309-313, Cys-317, Leu-331, and 344-346 contribute to the S-adenosyl-L-methionine site; these read LS, DRNRH, and KAL. Asp-309 serves as the catalytic Proton acceptor. The interval 383–429 is disordered; that stretch reads AKRAKTETKRNEKVEEEVECTSAEGEEDIGVIEESAEVDPEDVFSNQ. The span at 386 to 395 shows a compositional bias: basic and acidic residues; the sequence is AKTETKRNEK. Residues 396-429 show a composition bias toward acidic residues; the sequence is VEEEVECTSAEGEEDIGVIEESAEVDPEDVFSNQ.

Belongs to the class IV-like SAM-binding methyltransferase superfamily. TRM10 family. In terms of assembly, monomer.

The protein localises to the cytoplasm. It is found in the nucleus. It carries out the reaction guanosine(9) in tRNA + S-adenosyl-L-methionine = N(1)-methylguanosine(9) in tRNA + S-adenosyl-L-homocysteine + H(+). In terms of biological role, S-adenosyl-L-methionine-dependent guanine N(1)-methyltransferase that catalyzes the formation of N(1)-methylguanine at position 9 (m1G9) in cytoplasmic tRNA. This chain is tRNA (guanine(9)-N1)-methyltransferase, found in Cryptococcus neoformans var. neoformans serotype D (strain B-3501A) (Filobasidiella neoformans).